Reading from the N-terminus, the 225-residue chain is UPF0758 protein NGK_1225 (225 aa).

Positions threonine 102–methionine 224 constitute an MPN domain. Zn(2+) is bound by residues histidine 173, histidine 175, and aspartate 186. A JAMM motif motif is present at residues histidine 173 to aspartate 186.

The protein belongs to the UPF0758 family.

In Neisseria gonorrhoeae (strain NCCP11945), this protein is UPF0758 protein NGK_1225.